The primary structure comprises 464 residues: Protein FAM90A12 (464 aa).

3 disordered regions span residues 1 to 42, 70 to 389, and 411 to 437; these read MMAR…DPRL, PATL…HDGA, and APSF…SEAP. Basic and acidic residues-rich tracts occupy residues 74–89 and 97–114; these read GKKE…KPRA and NKDK…DPQR. The segment covering 180 to 197 has biased composition (low complexity); it reads LASLSPLRKASLSSSSSL.

This sequence belongs to the FAM90 family.

The polypeptide is Protein FAM90A12 (Homo sapiens (Human)).